Here is a 1209-residue protein sequence, read N- to C-terminus: DNA-directed RNA polymerase subunit beta' (1209 aa).

4 residues coordinate Zn(2+): cysteine 60, cysteine 62, cysteine 75, and cysteine 78. Aspartate 450, aspartate 452, and aspartate 454 together coordinate Mg(2+). Zn(2+) is bound by residues cysteine 819, cysteine 893, cysteine 900, and cysteine 903.

It belongs to the RNA polymerase beta' chain family. As to quaternary structure, the RNAP catalytic core consists of 2 alpha, 1 beta, 1 beta' and 1 omega subunit. When a sigma factor is associated with the core the holoenzyme is formed, which can initiate transcription. Requires Mg(2+) as cofactor. It depends on Zn(2+) as a cofactor.

The catalysed reaction is RNA(n) + a ribonucleoside 5'-triphosphate = RNA(n+1) + diphosphate. DNA-dependent RNA polymerase catalyzes the transcription of DNA into RNA using the four ribonucleoside triphosphates as substrates. This chain is DNA-directed RNA polymerase subunit beta', found in Streptococcus mutans serotype c (strain ATCC 700610 / UA159).